Consider the following 374-residue polypeptide: Heme A synthase (374 aa).

The disordered stretch occupies residues 1–22 (MSDHIRAASSPSRHGSEHGWQH). Helical transmembrane passes span 32–52 (ILVA…VMLG), 118–138 (RLWG…LAVT), 149–169 (LILI…MVAS), 184–204 (VVHL…ALSV), and 226–246 (LGLV…HAGL). Histidine 281 is a binding site for heme. Transmembrane regions (helical) follow at residues 283–300 (LLAT…LIGF), 309–329 (AVLP…ATLL), and 332–352 (VAVP…TAAI). Histidine 340 provides a ligand contact to heme.

The protein belongs to the COX15/CtaA family. Type 2 subfamily. As to quaternary structure, interacts with CtaB. Heme b serves as cofactor.

Its subcellular location is the cell membrane. The catalysed reaction is Fe(II)-heme o + 2 A + H2O = Fe(II)-heme a + 2 AH2. Its pathway is porphyrin-containing compound metabolism; heme A biosynthesis; heme A from heme O: step 1/1. Functionally, catalyzes the conversion of heme O to heme A by two successive hydroxylations of the methyl group at C8. The first hydroxylation forms heme I, the second hydroxylation results in an unstable dihydroxymethyl group, which spontaneously dehydrates, resulting in the formyl group of heme A. This chain is Heme A synthase, found in Granulibacter bethesdensis (strain ATCC BAA-1260 / CGDNIH1).